A 397-amino-acid chain; its full sequence is Phosphoglycerate kinase (397 aa).

Residues 23–25 (DFN), arginine 38, 61–64 (HMGK), arginine 122, and arginine 155 each bind substrate. Residues lysine 206, glycine 296, glutamate 327, and 353–356 (GGDS) contribute to the ATP site.

This sequence belongs to the phosphoglycerate kinase family. Monomer.

The protein localises to the cytoplasm. The enzyme catalyses (2R)-3-phosphoglycerate + ATP = (2R)-3-phospho-glyceroyl phosphate + ADP. The protein operates within carbohydrate degradation; glycolysis; pyruvate from D-glyceraldehyde 3-phosphate: step 2/5. In Clostridium perfringens (strain ATCC 13124 / DSM 756 / JCM 1290 / NCIMB 6125 / NCTC 8237 / Type A), this protein is Phosphoglycerate kinase.